A 540-amino-acid chain; its full sequence is Probable pectinesterase/pectinesterase inhibitor 60 (540 aa).

The signal sequence occupies residues 1-31 (MNIMMVQNISFLSLHLLLILLLCLRPLTTVA). Residues 32-185 (DGNSTNIDGW…SHLISNCLAV (154 aa)) form a pectinesterase inhibitor 60 region. N-linked (GlcNAc...) asparagine glycans are attached at residues N34, N91, N95, N120, N161, and N195. The segment at 225-526 (NLVVAKDGSG…FSVGKFIAGT (302 aa)) is pectinesterase 60. Residues T302 and Q332 each coordinate substrate. Residue D355 is the Proton donor; for pectinesterase activity of the active site. A disulfide bridge connects residues C369 and C389. D376 (nucleophile; for pectinesterase activity) is an active-site residue. Substrate-binding residues include R444 and W446.

This sequence in the N-terminal section; belongs to the PMEI family. In the C-terminal section; belongs to the pectinesterase family. Expressed in siliques.

The protein localises to the secreted. It is found in the cell wall. It carries out the reaction [(1-&gt;4)-alpha-D-galacturonosyl methyl ester](n) + n H2O = [(1-&gt;4)-alpha-D-galacturonosyl](n) + n methanol + n H(+). It functions in the pathway glycan metabolism; pectin degradation; 2-dehydro-3-deoxy-D-gluconate from pectin: step 1/5. Functionally, acts in the modification of cell walls via demethylesterification of cell wall pectin. The polypeptide is Probable pectinesterase/pectinesterase inhibitor 60 (PME60) (Arabidopsis thaliana (Mouse-ear cress)).